The sequence spans 441 residues: Xaa-Pro dipeptidase (441 aa).

5 residues coordinate Mn(2+): aspartate 244, aspartate 255, histidine 336, glutamate 381, and glutamate 420.

The protein belongs to the peptidase M24B family. Bacterial-type prolidase subfamily. Mn(2+) serves as cofactor.

The enzyme catalyses Xaa-L-Pro dipeptide + H2O = an L-alpha-amino acid + L-proline. In terms of biological role, splits dipeptides with a prolyl residue in the C-terminal position. In Xanthomonas oryzae pv. oryzae (strain MAFF 311018), this protein is Xaa-Pro dipeptidase.